Consider the following 565-residue polypeptide: Protein NRT1/ PTR FAMILY 5.15 (565 aa).

2 helical membrane-spanning segments follow: residues 49–67 and 80–100; these read FAYF…GPLG and WSGT…AYLG. The residue at position 104 (Thr-104) is a Phosphothreonine. The next 10 membrane-spanning stretches (helical) occupy residues 110–130, 142–162, 189–209, 217–237, 331–351, 368–388, 409–429, 454–474, 490–510, and 534–554; these read LIYI…IMGL, SIWV…GQGG, FFNW…IVVA, WAFG…IFLL, IPIW…ITFF, IPAA…VPLY, LQRI…AALV, IWWF…SMVG, IGLS…GFLI, and YFYW…LFIS.

It belongs to the major facilitator superfamily. Proton-dependent oligopeptide transporter (POT/PTR) (TC 2.A.17) family. As to expression, expressed in shoots, roots and leaves.

It localises to the membrane. This chain is Protein NRT1/ PTR FAMILY 5.15 (NPF5.15), found in Arabidopsis thaliana (Mouse-ear cress).